The sequence spans 200 residues: Large ribosomal subunit protein uL4 (200 aa).

The tract at residues 44-70 is disordered; that stretch reads AQKTRAEVTGSGKKPWRQKGTGRARSG.

The protein belongs to the universal ribosomal protein uL4 family. In terms of assembly, part of the 50S ribosomal subunit.

Its function is as follows. One of the primary rRNA binding proteins, this protein initially binds near the 5'-end of the 23S rRNA. It is important during the early stages of 50S assembly. It makes multiple contacts with different domains of the 23S rRNA in the assembled 50S subunit and ribosome. In terms of biological role, protein L4 is a both a transcriptional repressor and a translational repressor protein. It regulates transcription of the S10 operon (to which L4 belongs) by causing premature termination of transcription within the S10 leader. L4 controls the translation of the S10 operon by binding to its mRNA. Functionally, this protein when expressed in E.coli represses both transcription and translation of the endogenous S10 operon. As the M.morganii S10 leader can be regulated in vitro by the E.coli L4 protein this strongly suggests the endogenous protein controls its own S10 operon in a similar fashion. Forms part of the polypeptide exit tunnel. This is Large ribosomal subunit protein uL4 (rplD) from Morganella morganii (Proteus morganii).